Here is a 1170-residue protein sequence, read N- to C-terminus: Probable mRNA-capping enzyme (1170 aa).

The active-site N6-GMP-lysine intermediate is lysine 292. An mRNA cap 0 methyltransferase domain is found at 684 to 1007; that stretch reads SNAAGMRAFN…LNRYYVFRKT (324 aa). 693–694 provides a ligand contact to mRNA; that stretch reads NN. S-adenosyl-L-methionine contacts are provided by residues lysine 697, glycine 715, aspartate 737, and 813–815; that span reads QFT.

In the N-terminal section; belongs to the dsDNA virus mRNA guanylyltransferase family. The protein in the C-terminal section; belongs to the class I-like SAM-binding methyltransferase superfamily. mRNA cap 0 methyltransferase family.

The protein localises to the virion. It catalyses the reaction a 5'-end triphospho-ribonucleoside in mRNA + H2O = a 5'-end diphospho-ribonucleoside in mRNA + phosphate + H(+). It carries out the reaction a 5'-end diphospho-ribonucleoside in mRNA + GTP + H(+) = a 5'-end (5'-triphosphoguanosine)-ribonucleoside in mRNA + diphosphate. The enzyme catalyses a 5'-end (5'-triphosphoguanosine)-ribonucleoside in mRNA + S-adenosyl-L-methionine = a 5'-end (N(7)-methyl 5'-triphosphoguanosine)-ribonucleoside in mRNA + S-adenosyl-L-homocysteine. Its pathway is mRNA processing; mRNA capping. Functionally, responsible for methylating the 5'-cap structure of mRNAs. This is Probable mRNA-capping enzyme from Acanthamoeba polyphaga mimivirus (APMV).